A 413-amino-acid chain; its full sequence is N5-carboxyaminoimidazole ribonucleotide synthase (413 aa).

The interval 1–21 (MKRVSEQAGNPDGNPQAHVPG) is disordered. Residues Lys-122, Lys-162, 199 to 202 (EEKV), Glu-207, and 289 to 290 (NE) contribute to the ATP site. In terms of domain architecture, ATP-grasp spans 126 to 319 (RERLAELGAP…QFEQHLRAVM (194 aa)).

It belongs to the PurK/PurT family. In terms of assembly, homodimer.

It catalyses the reaction 5-amino-1-(5-phospho-beta-D-ribosyl)imidazole + hydrogencarbonate + ATP = 5-carboxyamino-1-(5-phospho-D-ribosyl)imidazole + ADP + phosphate + 2 H(+). Its pathway is purine metabolism; IMP biosynthesis via de novo pathway; 5-amino-1-(5-phospho-D-ribosyl)imidazole-4-carboxylate from 5-amino-1-(5-phospho-D-ribosyl)imidazole (N5-CAIR route): step 1/2. Catalyzes the ATP-dependent conversion of 5-aminoimidazole ribonucleotide (AIR) and HCO(3)(-) to N5-carboxyaminoimidazole ribonucleotide (N5-CAIR). The protein is N5-carboxyaminoimidazole ribonucleotide synthase of Corynebacterium ammoniagenes (Brevibacterium ammoniagenes).